The sequence spans 63 residues: Large ribosomal subunit protein uL29 (63 aa).

Belongs to the universal ribosomal protein uL29 family.

This Pelagibacter ubique (strain HTCC1062) protein is Large ribosomal subunit protein uL29.